Consider the following 93-residue polypeptide: OMEGA-ectatommitoxin(02)-Rm1c (93 aa).

An N-terminal signal peptide occupies residues 1–30 (MKDSYISIVIAYLMVTFILVSSMPIEGEKG). Cystine bridges form between Cys-39–Cys-52, Cys-47–Cys-68, and Cys-70–Cys-79. The EGF-like domain maps to 43–80 (YENYCFNGKCVHVVAQDEPGKPCYSCICDEFYIGERCG).

Belongs to the EGF domain peptide family. As to expression, expressed by the venom gland.

The protein localises to the secreted. Functionally, ant peptide with probable defensive activity which acts as a potent agonist of the mammalian epidermal growth factor receptor (EGFR). Mimics, both structurally and functionally, vertebrate epidermal growth factor (EGF) peptide hormones. In vivo, intraplantar injection in mice causes long-lasting (several days) hypersensitivity of the injected paw to both mechanical and thermal stimuli. Its long-lasting effect is unusual for venom toxins whose effects are usually immediate. One possible explanation is that it would reduce the duration of a nest attack, discourage future attacks, or enhance the actions of subsequent exposure to other pain-inducing venom peptides. This chain is OMEGA-ectatommitoxin(02)-Rm1c, found in Rhytidoponera metallica (Australian green-headed ant).